The following is a 286-amino-acid chain: L-cysteine S-thiosulfotransferase subunit SoxA (286 aa).

The N-terminal stretch at 1–27 is a signal peptide; it reads MKKTIQRGLFTGALVLMTAMTAKPANA. Cysteines 106 and 137 form a disulfide. The 107-residue stretch at 180–286 folds into the Cytochrome c domain; it reads DAYMKGKKFF…LKYNGPASRK (107 aa). Heme contacts are provided by Cys200 and His204. Arg243 is a substrate binding site. Residue Cys247 coordinates heme. Cys247 serves as the catalytic Cysteine persulfide intermediate.

It belongs to the SoxA family. As to quaternary structure, heterodimer of SoxA and SoxX. The SoxAX complex interacts with CT1020, SoxAX-binding protein SaxB (SoxK); this interaction seems to be between SoxA and CT1020 and stimulates catalytic activity of the SoxAX complex. Requires heme as cofactor. In terms of processing, cysteine persulfide at Cys-247.

It is found in the periplasm. It catalyses the reaction L-cysteinyl-[SoxY protein] + thiosulfate + 2 Fe(III)-[cytochrome c] = S-sulfosulfanyl-L-cysteinyl-[SoxY protein] + 2 Fe(II)-[cytochrome c] + 2 H(+). The catalysed reaction is S-sulfanyl-L-cysteinyl-[SoxY protein] + thiosulfate + 2 Fe(III)-[cytochrome c] = S-(2-sulfodisulfanyl)-L-cysteinyl-[SoxY protein] + 2 Fe(II)-[cytochrome c] + 2 H(+). Functionally, C-type monoheme cytochrome, which is part of the SoxAX cytochrome complex involved in sulfur oxidation. The SoxAX complex catalyzes the formation of a heterodisulfide bond between the conserved cysteine residue on a sulfur carrier SoxYZ complex subunit SoxY and thiosulfate or other inorganic sulfur substrates. This leads to the liberation of two electrons, which may be transferred from the SoxAX complex to another cytochrome c and which then may be used for reductive CO(2) fixation. The sequence is that of L-cysteine S-thiosulfotransferase subunit SoxA from Chlorobaculum tepidum (strain ATCC 49652 / DSM 12025 / NBRC 103806 / TLS) (Chlorobium tepidum).